Here is a 219-residue protein sequence, read N- to C-terminus: Cytidylate kinase (219 aa).

9 to 17 (GPAGSGKTT) is an ATP binding site.

Belongs to the cytidylate kinase family. Type 1 subfamily.

The protein resides in the cytoplasm. It catalyses the reaction CMP + ATP = CDP + ADP. The catalysed reaction is dCMP + ATP = dCDP + ADP. This is Cytidylate kinase from Fervidobacterium nodosum (strain ATCC 35602 / DSM 5306 / Rt17-B1).